We begin with the raw amino-acid sequence, 277 residues long: Small ribosomal subunit protein uS2 (277 aa).

2 stretches are compositionally biased toward basic and acidic residues: residues 227-256 (QARA…RTEA) and 267-277 (SEAKAEGNTEA). A disordered region spans residues 227–277 (QARAERQEAAAKEAAGDADKAPAEAERTEAPAEEAPAEAQSEAKAEGNTEA).

It belongs to the universal ribosomal protein uS2 family.

The polypeptide is Small ribosomal subunit protein uS2 (Corynebacterium jeikeium (strain K411)).